The chain runs to 1410 residues: DNA-directed RNA polymerase subunit beta' (1410 aa).

Zn(2+)-binding residues include Cys-70, Cys-72, Cys-85, and Cys-88. The Mg(2+) site is built by Asp-460, Asp-462, and Asp-464. The Zn(2+) site is built by Cys-814, Cys-888, Cys-895, and Cys-898.

This sequence belongs to the RNA polymerase beta' chain family. The RNAP catalytic core consists of 2 alpha, 1 beta, 1 beta' and 1 omega subunit. When a sigma factor is associated with the core the holoenzyme is formed, which can initiate transcription. Mg(2+) serves as cofactor. The cofactor is Zn(2+).

It catalyses the reaction RNA(n) + a ribonucleoside 5'-triphosphate = RNA(n+1) + diphosphate. Functionally, DNA-dependent RNA polymerase catalyzes the transcription of DNA into RNA using the four ribonucleoside triphosphates as substrates. The sequence is that of DNA-directed RNA polymerase subunit beta' from Buchnera aphidicola subsp. Cinara cedri (strain Cc).